A 231-amino-acid chain; its full sequence is Probable septum site-determining protein MinC (231 aa).

The segment at 102–125 (KEKAPRPAPAPQAPAQNTTPVTKT) is disordered.

The protein belongs to the MinC family. Interacts with MinD and FtsZ.

Cell division inhibitor that blocks the formation of polar Z ring septums. Rapidly oscillates between the poles of the cell to destabilize FtsZ filaments that have formed before they mature into polar Z rings. Prevents FtsZ polymerization. The sequence is that of Probable septum site-determining protein MinC from Escherichia coli O139:H28 (strain E24377A / ETEC).